The chain runs to 82 residues: Small ribosomal subunit protein bS16 (82 aa).

This sequence belongs to the bacterial ribosomal protein bS16 family.

In Proteus mirabilis (strain HI4320), this protein is Small ribosomal subunit protein bS16.